The chain runs to 488 residues: UDP-N-acetylmuramate--L-alanine ligase (488 aa).

129–135 (GSHGKTT) provides a ligand contact to ATP.

Belongs to the MurCDEF family.

The protein resides in the cytoplasm. It carries out the reaction UDP-N-acetyl-alpha-D-muramate + L-alanine + ATP = UDP-N-acetyl-alpha-D-muramoyl-L-alanine + ADP + phosphate + H(+). Its pathway is cell wall biogenesis; peptidoglycan biosynthesis. Functionally, cell wall formation. The chain is UDP-N-acetylmuramate--L-alanine ligase from Prochlorococcus marinus (strain MIT 9313).